A 109-amino-acid polypeptide reads, in one-letter code: Parvalbumin alpha (109 aa).

2 consecutive EF-hand domains span residues 38 to 73 and 77 to 109; these read KSKE…FTPE and LSDK…VSES. Ca(2+) contacts are provided by D51, D53, S55, F57, E59, E62, D90, D92, D94, K96, and E101.

It belongs to the parvalbumin family.

In terms of biological role, in muscle, parvalbumin is thought to be involved in relaxation after contraction. It binds two calcium ions. The protein is Parvalbumin alpha of Pelophylax lessonae (Pool frog).